Here is a 300-residue protein sequence, read N- to C-terminus: Acetylglutamate kinase (300 aa).

Substrate is bound by residues 68 to 69, Arg90, and Asn195; that span reads GG.

Belongs to the acetylglutamate kinase family. ArgB subfamily.

It localises to the cytoplasm. The enzyme catalyses N-acetyl-L-glutamate + ATP = N-acetyl-L-glutamyl 5-phosphate + ADP. Its pathway is amino-acid biosynthesis; L-arginine biosynthesis; N(2)-acetyl-L-ornithine from L-glutamate: step 2/4. Functionally, catalyzes the ATP-dependent phosphorylation of N-acetyl-L-glutamate. The polypeptide is Acetylglutamate kinase (Azotobacter vinelandii (strain DJ / ATCC BAA-1303)).